Reading from the N-terminus, the 127-residue chain is MAQSVPPGDIQTQPGTKIVFNAPYDDKHTYHIKVINSSARRIGYGIKTTNMKRLGVDPPCGVLDPKEAVLLAVSCDAFAFGQEDTNNDRITIEWTNTPDGAAKQFRREWFQGDGMVRRKNLPIEYNP.

A2 is subject to N-acetylalanine. Residues 9 to 126 form the MSP domain; it reads DIQTQPGTKI…RRKNLPIEYN (118 aa).

As to expression, sperm.

It is found in the cell projection. Its subcellular location is the pseudopodium. The protein resides in the cytoplasm. The protein localises to the cytoskeleton. Central component in molecular interactions underlying sperm crawling. Forms an extensive filament system that extends from sperm villipoda, along the leading edge of the pseudopod. The chain is Major sperm protein 78 (msp-78) from Caenorhabditis elegans.